The primary structure comprises 392 residues: Sugar efflux transporter A (392 aa).

Topologically, residues 1-10 (MIWIMTMARR) are cytoplasmic. Residues 11–31 (MNGVYAAFMLVAFMMGVAGAL) traverse the membrane as a helical segment. At 32-48 (QAPTLSLFLSREVGAQP) the chain is on the periplasmic side. The chain crosses the membrane as a helical span at residues 49–69 (FWIGLFYTVNAIAGIGVSLWL). At 70 to 81 (AKRSDSQGDRRK) the chain is on the cytoplasmic side. A helical transmembrane segment spans residues 82–102 (LIIFCCLMAIGNALLFAFNRH). The Periplasmic portion of the chain corresponds to 103–106 (YLTL). The chain crosses the membrane as a helical span at residues 107 to 127 (ITCGVLLASLANTAMPQLFAL). Over 128–149 (AREYADNSAREVVMFSSVMRAQ) the chain is Cytoplasmic. The helical transmembrane segment at 150–170 (LSLAWVIGPPLAFMLALNYGF) threads the bilayer. Residue Thr171 is a topological domain, periplasmic. Residues 172–192 (VMFSIAAGIFTLSLVLIAFML) traverse the membrane as a helical segment. Over 193-219 (PSVARVELPSENALSMQGGWQDSNVRM) the chain is Cytoplasmic. A helical transmembrane segment spans residues 220–240 (LFVASTLMWTCNTMYIIDMPL). Residues 241–251 (WISSELGLPDK) lie on the Periplasmic side of the membrane. The chain crosses the membrane as a helical span at residues 252-272 (LAGFLMGTAAGLEIPAMILAG). Over 273 to 282 (YYVKRYGKRR) the chain is Cytoplasmic. A helical membrane pass occupies residues 283–303 (MMVIAVAAGVLFYTGLIFFNS). Residues 304–308 (RMALM) lie on the Periplasmic side of the membrane. The chain crosses the membrane as a helical span at residues 309–329 (TLQLFNAVFIGIVAGIGMLWF). Residues 330–342 (QDLMPGRAGAATT) are Cytoplasmic-facing. Residues 343-363 (LFTNSISTGVILAGVIQGAIA) traverse the membrane as a helical segment. At 364 to 365 (QS) the chain is on the periplasmic side. Residues 366–386 (WGHFAVYWVIAVISVVALFLT) form a helical membrane-spanning segment. The Cytoplasmic portion of the chain corresponds to 387-392 (AKVKDV).

It belongs to the major facilitator superfamily. Set transporter family.

The protein localises to the cell inner membrane. Functionally, involved in the efflux of sugars. The physiological role may be the detoxification of non-metabolizable sugar analogs. Can transport IPTG, lactose and glucose. Has broad substrate specificity, with preferences for glucosides or galactosides with alkyl or aryl substituents. The polypeptide is Sugar efflux transporter A (setA) (Escherichia coli (strain K12)).